The sequence spans 267 residues: Deoxyribose-phosphate aldolase (267 aa).

Asp-123 (proton donor/acceptor) is an active-site residue. Catalysis depends on Lys-185, which acts as the Schiff-base intermediate with acetaldehyde. Lys-217 serves as the catalytic Proton donor/acceptor.

The protein belongs to the DeoC/FbaB aldolase family. DeoC type 1 subfamily.

It localises to the cytoplasm. The catalysed reaction is 2-deoxy-D-ribose 5-phosphate = D-glyceraldehyde 3-phosphate + acetaldehyde. It functions in the pathway carbohydrate degradation; 2-deoxy-D-ribose 1-phosphate degradation; D-glyceraldehyde 3-phosphate and acetaldehyde from 2-deoxy-alpha-D-ribose 1-phosphate: step 2/2. Its function is as follows. Catalyzes a reversible aldol reaction between acetaldehyde and D-glyceraldehyde 3-phosphate to generate 2-deoxy-D-ribose 5-phosphate. This chain is Deoxyribose-phosphate aldolase, found in Coccidioides immitis (strain RS) (Valley fever fungus).